The following is a 385-amino-acid chain: Effector protein hopAB3 (385 aa).

Disordered stretches follow at residues 1–61, 73–139, and 215–293; these read MVGI…AGRP, TREW…SPLY, and ADSQ…PRIN. The host recognition stretch occupies residues 1 to 333; that stretch reads MVGISGRAGP…INMEDLRAAL (333 aa). Over residues 217-234 the composition is skewed to low complexity; it reads SQQAARAPARTPPRSSVR. Polar residues-rich tracts occupy residues 245–256 and 265–283; these read ATESSSGSNQRS and MTSNQRRPSSASNASTSQR.

It belongs to the HopAB family. In terms of assembly, interacts physically with plant cell Pto.

Its subcellular location is the secreted. In terms of biological role, effector protein involved in gene-for-gene resistance in tomato plants. It is recognized by the host Pto resistance protein and elicits Pto and Prf-dependent hypersensitive response (HR) and programmed cell death (PCD), resulting in host immunity. In susceptible plants, promotes virulence, in part, by enhancing the development of disease symptoms and bacterial growth. This is Effector protein hopAB3 (hopAB3) from Pseudomonas syringae pv. maculicola.